The primary structure comprises 961 residues: Translation initiation factor IF-2 (961 aa).

Residues 146 to 158 show a composition bias toward polar residues; that stretch reads PSVPNKTLTTTPH. Residues 146–373 form a disordered region; it reads PSVPNKTLTT…KTTSQVTTQP (228 aa). Residues 163 to 176 are compositionally biased toward basic and acidic residues; that stretch reads NHSEKDVLESHDSS. Over residues 177-187 the composition is skewed to low complexity; it reads NKNIKQSSSQN. Residues 230 to 239 show a composition bias toward basic and acidic residues; it reads SEEKNVDIQQ. Composition is skewed to polar residues over residues 241–285 and 301–310; these read EIPS…TAPH and YQGQNRNNFI. Basic residues predominate over residues 355–364; the sequence is NRGRKRHKQK. Residues 460-627 enclose the tr-type G domain; it reads RRPPVVTIMG…LLALQTDILE (168 aa). A G1 region spans residues 469 to 476; the sequence is GHVDHGKT. Residue 469-476 coordinates GTP; the sequence is GHVDHGKT. The interval 494–498 is G2; that stretch reads GITQH. Residues 515-518 form a G3 region; sequence DTPG. GTP-binding positions include 515–519 and 569–572; these read DTPGH and NKMD. Residues 569-572 are G4; sequence NKMD. Residues 605 to 607 are G5; that stretch reads SAK.

It belongs to the TRAFAC class translation factor GTPase superfamily. Classic translation factor GTPase family. IF-2 subfamily.

Its subcellular location is the cytoplasm. Functionally, one of the essential components for the initiation of protein synthesis. Protects formylmethionyl-tRNA from spontaneous hydrolysis and promotes its binding to the 30S ribosomal subunits. Also involved in the hydrolysis of GTP during the formation of the 70S ribosomal complex. This is Translation initiation factor IF-2 from Lawsonia intracellularis (strain PHE/MN1-00).